The following is a 414-amino-acid chain: Isocitrate dehydrogenase [NADP] cytoplasmic (414 aa).

Serine 2 carries the N-acetylserine modification. Tyrosine 42 is modified (phosphotyrosine). 75–77 is an NADP(+) binding site; that stretch reads TIT. Position 77 (threonine 77) interacts with substrate. An N6-acetyllysine modification is found at lysine 81. Arginine 82 serves as a coordination point for NADP(+). Substrate-binding positions include 94–100 and arginine 109; that span reads SPNGTIR. Lysine 126 is modified (N6-succinyllysine). 2 residues coordinate substrate: arginine 132 and lysine 212. Lysine 224 and lysine 233 each carry N6-acetyllysine. Aspartate 252 provides a ligand contact to Mn(2+). Lysine 260 contacts NADP(+). Mn(2+)-binding residues include aspartate 275 and aspartate 279. An NADP(+)-binding site is contributed by 310–315; the sequence is GTVTRH. Lysine 321 carries the N6-acetyllysine modification. Asparagine 328 is an NADP(+) binding site. Serine 389 carries the phosphoserine modification. The residue at position 400 (lysine 400) is an N6-succinyllysine.

This sequence belongs to the isocitrate and isopropylmalate dehydrogenases family. Homodimer. It depends on Mg(2+) as a cofactor. Requires Mn(2+) as cofactor. Acetylation at Lys-374 dramatically reduces catalytic activity. As to expression, expressed preferentially in corneal epithelium. Constitute approximately 13% of the total soluble bovine corneal epithelial proteins.

It localises to the cytoplasm. The protein resides in the cytosol. The catalysed reaction is D-threo-isocitrate + NADP(+) = 2-oxoglutarate + CO2 + NADPH. Functionally, catalyzes the NADP(+)-dependent oxidative decarboxylation of isocitrate (D-threo-isocitrate) to 2-ketoglutarate (2-oxoglutarate), which is required by other enzymes such as the phytanoyl-CoA dioxygenase. Plays a critical role in the generation of NADPH, an important cofactor in many biosynthesis pathways. May act as a corneal epithelial crystallin and may be involved in maintaining corneal epithelial transparency. In Bos taurus (Bovine), this protein is Isocitrate dehydrogenase [NADP] cytoplasmic (IDH1).